The chain runs to 194 residues: Protein ORF31 (194 aa).

The signal sequence occupies residues 1–25 (MKSVASPLCQFHGVFCLYQCRQCLA).

It belongs to the herpesviridae UL92 family. As to quaternary structure, interacts with ORF34.

It is found in the host nucleus. It localises to the host cytoplasm. In terms of biological role, plays an important role in the expression of late genes. May play a role in viral replication. The chain is Protein ORF31 (ORF31) from Homo sapiens (Human).